The primary structure comprises 130 residues: Albumin-1 A (130 aa).

Positions 1 to 26 (MASVKLASLIVLFATLGMFLTKNVGA) are cleaved as a signal peptide. 3 disulfide bridges follow: Cys29–Cys46, Cys33–Cys48, and Cys41–Cys58. 2 propeptides span residues 64–69 (VFLRTN) and 123–130 (LLKSVSTA).

Post-translationally, the C-terminal glycine may be removed from PA1b. In terms of tissue distribution, major component of both the cotyledons and embryonic axes of mature seeds.

Functionally, PA1b binds to basic 7S globulin (BG) and stimulates its phosphorylation activity. Involved in the signal transduction system to regulate the growth and differentiation as a hormone peptide. Toxic to various insects through binding to a high affinity binding site in the insect gut. This Pisum sativum (Garden pea) protein is Albumin-1 A.